Reading from the N-terminus, the 172-residue chain is Small ribosomal subunit protein uS5 (172 aa).

In terms of domain architecture, S5 DRBM spans 17 to 80 (LKEKMIAINR…EEARRNMTKV (64 aa)).

Belongs to the universal ribosomal protein uS5 family. Part of the 30S ribosomal subunit. Contacts proteins S4 and S8.

Its function is as follows. With S4 and S12 plays an important role in translational accuracy. Located at the back of the 30S subunit body where it stabilizes the conformation of the head with respect to the body. This Polaromonas naphthalenivorans (strain CJ2) protein is Small ribosomal subunit protein uS5.